Consider the following 30-residue polypeptide: Ranatuerin-2OK (30 aa).

A disulfide bridge links Cys-23 with Cys-30.

In terms of tissue distribution, expressed by the skin glands.

The protein resides in the secreted. Functionally, antimicrobial peptide. Active against Gram-negative bacterium E.coli (MIC=12.5 uM) and against Gram-positive bacterium S.aureus (MIC=50 uM). This chain is Ranatuerin-2OK, found in Nidirana okinavana (Kampira Falls frog).